The chain runs to 1028 residues: Isoleucine--tRNA ligase (1028 aa).

The short motif at 51–61 (PTANGRPHIGH) is the 'HIGH' region element. Residues 591–595 (KMSKS) carry the 'KMSKS' region motif. K594 serves as a coordination point for ATP.

This sequence belongs to the class-I aminoacyl-tRNA synthetase family. IleS type 2 subfamily. As to quaternary structure, monomer. The cofactor is Zn(2+).

It localises to the cytoplasm. The catalysed reaction is tRNA(Ile) + L-isoleucine + ATP = L-isoleucyl-tRNA(Ile) + AMP + diphosphate. In terms of biological role, catalyzes the attachment of isoleucine to tRNA(Ile). As IleRS can inadvertently accommodate and process structurally similar amino acids such as valine, to avoid such errors it has two additional distinct tRNA(Ile)-dependent editing activities. One activity is designated as 'pretransfer' editing and involves the hydrolysis of activated Val-AMP. The other activity is designated 'posttransfer' editing and involves deacylation of mischarged Val-tRNA(Ile). The chain is Isoleucine--tRNA ligase from Thermoplasma volcanium (strain ATCC 51530 / DSM 4299 / JCM 9571 / NBRC 15438 / GSS1).